We begin with the raw amino-acid sequence, 204 residues long: MSAQDKLIKPSHLITMDDIIREGNPTLRAVAKEVSLPLCDEDILLGEKMMQFLKHSQDPVMAEKLGLRAGVGLAAPQIDVSKRIIAVLVPNLPDKEGNPPKEAYSWQEVLYNPKIVSHSVQDAALSDGEGCLSVDRVVEGYVVRHARVTVDYYDKEGQQHRIKLKGYNAIVVQHEIDHINGILFYDRINAKNPFETKEELLILD.

Fe cation is bound by residues cysteine 131 and histidine 174. Glutamate 175 is a catalytic residue. Histidine 178 is a Fe cation binding site.

Belongs to the polypeptide deformylase family. Fe(2+) serves as cofactor.

The catalysed reaction is N-terminal N-formyl-L-methionyl-[peptide] + H2O = N-terminal L-methionyl-[peptide] + formate. Removes the formyl group from the N-terminal Met of newly synthesized proteins. Requires at least a dipeptide for an efficient rate of reaction. N-terminal L-methionine is a prerequisite for activity but the enzyme has broad specificity at other positions. The protein is Peptide deformylase of Streptococcus pyogenes serotype M18 (strain MGAS8232).